Reading from the N-terminus, the 117-residue chain is MNFGLRLIFLVLTLKGVKCEVQLVESGGGLVKPGGSLKLSCAASGFAFSSYDMSWVRQTPEKRLEWVAYISSGGGSTYYPDTVKGRFTISRDNAKNTLYLQMSSLKSEDTAMYYCAR.

The signal sequence occupies residues 1–19; it reads MNFGLRLIFLVLTLKGVKC. Positions 20 to 49 are framework-1; it reads EVQLVESGGGLVKPGGSLKLSCAASGFAFS. A disulfide bridge connects residues Cys41 and Cys115. The complementarity-determining-1 stretch occupies residues 50-54; that stretch reads SYDMS. The tract at residues 55–68 is framework-2; that stretch reads WVRQTPEKRLEWVA. The tract at residues 69–85 is complementarity-determining-2; it reads YISSGGGSTYYPDTVKG. Positions 86–117 are framework-3; the sequence is RFTISRDNAKNTLYLQMSSLKSEDTAMYYCAR.

The sequence is that of Ig heavy chain V region 345 from Mus musculus (Mouse).